We begin with the raw amino-acid sequence, 284 residues long: L-ribulose-5-phosphate 3-epimerase UlaE (284 aa).

Belongs to the L-ribulose-5-phosphate 3-epimerase family.

The enzyme catalyses L-ribulose 5-phosphate = L-xylulose 5-phosphate. It participates in cofactor degradation; L-ascorbate degradation; D-xylulose 5-phosphate from L-ascorbate: step 3/4. Functionally, catalyzes the isomerization of L-xylulose-5-phosphate to L-ribulose-5-phosphate. Is involved in the anaerobic L-ascorbate utilization. The chain is L-ribulose-5-phosphate 3-epimerase UlaE from Escherichia coli O17:K52:H18 (strain UMN026 / ExPEC).